The chain runs to 231 residues: 5'-methylthioadenosine/S-adenosylhomocysteine nucleosidase (231 aa).

The active-site Proton acceptor is Glu12. Substrate is bound by residues Gly78, Met153, and 174-175 (ME). The Proton donor role is filled by Asp198.

Belongs to the PNP/UDP phosphorylase family. MtnN subfamily.

The enzyme catalyses S-adenosyl-L-homocysteine + H2O = S-(5-deoxy-D-ribos-5-yl)-L-homocysteine + adenine. It catalyses the reaction S-methyl-5'-thioadenosine + H2O = 5-(methylsulfanyl)-D-ribose + adenine. It carries out the reaction 5'-deoxyadenosine + H2O = 5-deoxy-D-ribose + adenine. The protein operates within amino-acid biosynthesis; L-methionine biosynthesis via salvage pathway; S-methyl-5-thio-alpha-D-ribose 1-phosphate from S-methyl-5'-thioadenosine (hydrolase route): step 1/2. Catalyzes the irreversible cleavage of the glycosidic bond in both 5'-methylthioadenosine (MTA) and S-adenosylhomocysteine (SAH/AdoHcy) to adenine and the corresponding thioribose, 5'-methylthioribose and S-ribosylhomocysteine, respectively. Also cleaves 5'-deoxyadenosine, a toxic by-product of radical S-adenosylmethionine (SAM) enzymes, into 5-deoxyribose and adenine. This is 5'-methylthioadenosine/S-adenosylhomocysteine nucleosidase from Bacillus anthracis (strain A0248).